We begin with the raw amino-acid sequence, 72 residues long: Translation initiation factor IF-1 (72 aa).

Residues 1 to 72 enclose the S1-like domain; sequence MSKEDVIEVE…SRGRIVYRFK (72 aa).

This sequence belongs to the IF-1 family. As to quaternary structure, component of the 30S ribosomal translation pre-initiation complex which assembles on the 30S ribosome in the order IF-2 and IF-3, IF-1 and N-formylmethionyl-tRNA(fMet); mRNA recruitment can occur at any time during PIC assembly.

The protein resides in the cytoplasm. In terms of biological role, one of the essential components for the initiation of protein synthesis. Stabilizes the binding of IF-2 and IF-3 on the 30S subunit to which N-formylmethionyl-tRNA(fMet) subsequently binds. Helps modulate mRNA selection, yielding the 30S pre-initiation complex (PIC). Upon addition of the 50S ribosomal subunit IF-1, IF-2 and IF-3 are released leaving the mature 70S translation initiation complex. The chain is Translation initiation factor IF-1 from Desulfitobacterium hafniense (strain Y51).